A 418-amino-acid chain; its full sequence is MAFIAALGILMAGICPTVLCFSDDTWGIDILLHKNQESGTPDDSLTLASINTDFAFSLYKKMALKNPDKNIVFSPLSISAALALVSLGAKGNTLEEILEGLKFNLTETSEADIHQGFGHLLQRLSQPEDQDQINIGNAMFIEKDLQILAEFHEKTRALYQTEAFTADFQQPTEATKLINDYVSNQTQGMIKKLISELDDRTLMVLVNYIYFKGKWKISFDPQDTFESEFYLDEKRSVKVPMMKMKFLTTRHFRDEELSCSVLELKYTGNASALFILPDQGRMQQVEASLQPETLRKWWKSLKTRKIGELYLPKFSISTDYNLKDILPELGIKEIFSKQADLSGITGTKDLSVSQVVHKAVLDVAETGTEAAAATGFIFGFRSRRLQTMTVQFNRPFLMVISHTGVQTTLFMAKVTNPK.

The N-terminal stretch at 1 to 20 is a signal peptide; sequence MAFIAALGILMAGICPTVLC. N-linked (GlcNAc...) asparagine glycans are attached at residues N104, N184, and N269. Positions 367–392 are RCL; sequence GTEAAAATGFIFGFRSRRLQTMTVQF.

The protein belongs to the serpin family. Expressed in liver and testis.

The protein localises to the secreted. The sequence is that of Serine protease inhibitor A3M (Serpina3m) from Mus musculus (Mouse).